A 249-amino-acid chain; its full sequence is Probable phosphatase Shal_1519 (249 aa).

The Zn(2+) site is built by H8, H10, H16, H41, E74, H102, H132, D193, and H195.

The protein belongs to the PHP family. The cofactor is Zn(2+).

The sequence is that of Probable phosphatase Shal_1519 from Shewanella halifaxensis (strain HAW-EB4).